We begin with the raw amino-acid sequence, 91 residues long: Early E3B 10.4 kDa protein (91 aa).

Positions 1–22 are cleaved as a signal peptide; it reads MIPRVFILLTLVALFCACSTLA. Topologically, residues 23–34 are lumenal; it reads AVSHIEVDCIPA. The chain crosses the membrane as a helical span at residues 35–60; it reads FTVYLLYGFVTLTLICSLITVVIAFI. Over 61-91 the chain is Cytoplasmic; the sequence is QCIDWVCVRFAYLRHHPQYRDRTIAELLRIL.

Belongs to the adenoviridae E3B family.

It localises to the host endoplasmic reticulum membrane. Down-regulates the EGF receptor. The protein is Early E3B 10.4 kDa protein of Homo sapiens (Human).